Reading from the N-terminus, the 426-residue chain is 3-phosphoshikimate 1-carboxyvinyltransferase (426 aa).

3-phosphoshikimate-binding residues include lysine 20, serine 21, and arginine 25. A phosphoenolpyruvate-binding site is contributed by lysine 20. Positions 92 and 120 each coordinate phosphoenolpyruvate. 3-phosphoshikimate contacts are provided by serine 166, glutamine 168, aspartate 312, and lysine 339. Glutamine 168 contributes to the phosphoenolpyruvate binding site. The Proton acceptor role is filled by aspartate 312. Positions 343 and 385 each coordinate phosphoenolpyruvate.

This sequence belongs to the EPSP synthase family. As to quaternary structure, monomer.

Its subcellular location is the cytoplasm. It catalyses the reaction 3-phosphoshikimate + phosphoenolpyruvate = 5-O-(1-carboxyvinyl)-3-phosphoshikimate + phosphate. It participates in metabolic intermediate biosynthesis; chorismate biosynthesis; chorismate from D-erythrose 4-phosphate and phosphoenolpyruvate: step 6/7. In terms of biological role, catalyzes the transfer of the enolpyruvyl moiety of phosphoenolpyruvate (PEP) to the 5-hydroxyl of shikimate-3-phosphate (S3P) to produce enolpyruvyl shikimate-3-phosphate and inorganic phosphate. This is 3-phosphoshikimate 1-carboxyvinyltransferase from Enterococcus faecalis (strain ATCC 700802 / V583).